Here is a 251-residue protein sequence, read N- to C-terminus: Leucine-rich repeat and calponin homology domain-containing protein 1 (251 aa).

The disordered stretch occupies residues Ser-73–Thr-97. A phosphoserine mark is found at Ser-87 and Ser-91. Residues Pro-88–Thr-97 show a composition bias toward polar residues. The residue at position 123 (Thr-123) is a Phosphothreonine. A Calponin-homology (CH) domain is found at Met-131 to Thr-244.

As to quaternary structure, interacts (via LRR repeats) with unphosphorylated DOCK8 (via DHR-2 domain); the interaction prevents the interaction between DOCK8 and CDC42.

Its subcellular location is the cytoplasm. Its function is as follows. Acts as a negative regulator of GTPase CDC42 by sequestering CDC42-guanine exchange factor DOCK8. Probably by preventing CDC42 activation, negatively regulates CD4(+) T-cell migration. This chain is Leucine-rich repeat and calponin homology domain-containing protein 1, found in Felis catus (Cat).